A 1187-amino-acid polypeptide reads, in one-letter code: Non-receptor tyrosine-protein kinase TYK2 (1187 aa).

The FERM domain occupies 26-431; the sequence is GGLKVLLHWA…GYFRLTADSS (406 aa). A Phosphotyrosine modification is found at tyrosine 292. A disordered region spans residues 335–366; the sequence is KEEGSSGSSGRNPQASLFGKKAKAHKAVGQPA. Residues 339 to 349 show a composition bias toward polar residues; sequence SSGSSGRNPQA. The region spanning 450–529 is the SH2; atypical domain; sequence GIHGPLLEPF…GRSFPSVREL (80 aa). 2 positions are modified to phosphoserine: serine 499 and serine 525. In terms of domain architecture, Protein kinase 1 spans 589–875; that stretch reads ITQLSHLGQG…LTRLQPHNLA (287 aa). Tyrosine 604 carries the post-translational modification Phosphotyrosine. Residues 610–629 form a disordered region; it reads VEGSGDPEEGKMDDEDPLVP. The span at 614 to 626 shows a compositional bias: acidic residues; that stretch reads GDPEEGKMDDEDP. At serine 884 the chain carries Phosphoserine. A Protein kinase 2 domain is found at 897–1176; it reads LKKIRDLGEG…PILKTVHEKY (280 aa). ATP is bound by residues 903–911 and lysine 930; that span reads LGEGHFGKV. The active-site Proton acceptor is aspartate 1023. At tyrosine 1054 the chain carries Phosphotyrosine; by autocatalysis. Tyrosine 1055 bears the Phosphotyrosine mark.

Belongs to the protein kinase superfamily. Tyr protein kinase family. JAK subfamily. In terms of assembly, interacts (via FERM domain) with JAKMIP1. Interacts with PIK3R1; this interaction is important for cell migration. Interacts with MPL/TPOR. (Microbial infection) Interacts with Epstein-Barr virus protein LMP1; this interaction inhibits TYK2-mediated interferon signaling. As to quaternary structure, (Microbial infection) Interacts with papillomavirus-18 protein E6; this interaction impairs JAK-STAT activation by interferon-alpha. In terms of assembly, (Microbial infection) Interacts with Epstein-Barr virus (EBV) tegument protein BGLF2; this interaction participates in the inhibition of type I IFN signaling by the virus. Phosphorylated. Phosphorylation by JAK1 at Tyr-1054 and Tyr-1055 induces kinase activation. Observed in all cell lines analyzed. Expressed in a variety of lymphoid and non-lymphoid cell lines.

The enzyme catalyses L-tyrosyl-[protein] + ATP = O-phospho-L-tyrosyl-[protein] + ADP + H(+). Its activity is regulated as follows. The protein kinase 1 domain (also termed pseudokinase domain) mediates autoinhibition of the TYK2 kinase domain. Tyrosine kinase of the non-receptor type involved in numerous cytokines and interferons signaling, which regulates cell growth, development, cell migration, innate and adaptive immunity. Plays both structural and catalytic roles in numerous interleukins and interferons (IFN-alpha/beta) signaling. Associates with heterodimeric cytokine receptor complexes and activates STAT family members including STAT1, STAT3, STAT4 or STAT6. The heterodimeric cytokine receptor complexes are composed of (1) a TYK2-associated receptor chain (IFNAR1, IL12RB1, IL10RB or IL13RA1), and (2) a second receptor chain associated either with JAK1 or JAK2. In response to cytokine-binding to receptors, phosphorylates and activates receptors (IFNAR1, IL12RB1, IL10RB or IL13RA1), creating docking sites for STAT members. In turn, recruited STATs are phosphorylated by TYK2 (or JAK1/JAK2 on the second receptor chain), form homo- and heterodimers, translocate to the nucleus, and regulate cytokine/growth factor responsive genes. Negatively regulates STAT3 activity by promototing phosphorylation at a specific tyrosine that differs from the site used for signaling. This chain is Non-receptor tyrosine-protein kinase TYK2 (TYK2), found in Homo sapiens (Human).